The primary structure comprises 354 residues: Ferrochelatase (354 aa).

Histidine 214 and glutamate 295 together coordinate Fe cation.

This sequence belongs to the ferrochelatase family.

The protein resides in the cytoplasm. The enzyme catalyses heme b + 2 H(+) = protoporphyrin IX + Fe(2+). It participates in porphyrin-containing compound metabolism; protoheme biosynthesis; protoheme from protoporphyrin-IX: step 1/1. Catalyzes the ferrous insertion into protoporphyrin IX. The sequence is that of Ferrochelatase from Burkholderia cenocepacia (strain HI2424).